The sequence spans 179 residues: ATP synthase subunit delta (179 aa).

The protein belongs to the ATPase delta chain family. F-type ATPases have 2 components, F(1) - the catalytic core - and F(0) - the membrane proton channel. F(1) has five subunits: alpha(3), beta(3), gamma(1), delta(1), epsilon(1). F(0) has three main subunits: a(1), b(2) and c(10-14). The alpha and beta chains form an alternating ring which encloses part of the gamma chain. F(1) is attached to F(0) by a central stalk formed by the gamma and epsilon chains, while a peripheral stalk is formed by the delta and b chains.

It is found in the cell membrane. F(1)F(0) ATP synthase produces ATP from ADP in the presence of a proton or sodium gradient. F-type ATPases consist of two structural domains, F(1) containing the extramembraneous catalytic core and F(0) containing the membrane proton channel, linked together by a central stalk and a peripheral stalk. During catalysis, ATP synthesis in the catalytic domain of F(1) is coupled via a rotary mechanism of the central stalk subunits to proton translocation. Its function is as follows. This protein is part of the stalk that links CF(0) to CF(1). It either transmits conformational changes from CF(0) to CF(1) or is implicated in proton conduction. This chain is ATP synthase subunit delta, found in Staphylococcus aureus (strain Mu50 / ATCC 700699).